Reading from the N-terminus, the 513-residue chain is ATP synthase subunit alpha (513 aa).

Residue 171–178 participates in ATP binding; that stretch reads GDRQIGKT.

Belongs to the ATPase alpha/beta chains family. F-type ATPases have 2 components, CF(1) - the catalytic core - and CF(0) - the membrane proton channel. CF(1) has five subunits: alpha(3), beta(3), gamma(1), delta(1), epsilon(1). CF(0) has three main subunits: a(1), b(2) and c(9-12). The alpha and beta chains form an alternating ring which encloses part of the gamma chain. CF(1) is attached to CF(0) by a central stalk formed by the gamma and epsilon chains, while a peripheral stalk is formed by the delta and b chains.

The protein resides in the cell membrane. The enzyme catalyses ATP + H2O + 4 H(+)(in) = ADP + phosphate + 5 H(+)(out). In terms of biological role, produces ATP from ADP in the presence of a proton gradient across the membrane. The alpha chain is a regulatory subunit. The protein is ATP synthase subunit alpha of Wolbachia pipientis wMel.